Consider the following 817-residue polypeptide: Exocyst complex component 6 (817 aa).

2 coiled-coil regions span residues 87-149 and 247-270; these read QSFV…DQIA and TDAE…EIEV.

It belongs to the SEC15 family. The exocyst complex is composed of sec-3/exoc1, sec-5/exoc2, sec-6/exoc3, sec-8/exoc4, sec-10/exoc5, sec-15/exoc6, exo-70/exoc7 and exo-84/exoc8.

Its function is as follows. Component of the exocyst complex involved in the docking of exocytic vesicles with fusion sites on the plasma membrane. The protein is Exocyst complex component 6 (sec-15) of Caenorhabditis elegans.